We begin with the raw amino-acid sequence, 632 residues long: Probable potassium transport system protein Kup 1 (632 aa).

Helical transmembrane passes span 17–37 (LFYL…TSPL), 60–80 (LISL…VLFL), 106–126 (TALL…DAMI), 144–164 (PSLA…LFVV), 175–195 (FFGP…ISHI), 210–230 (AVSF…AVFL), 254–274 (WFLL…ALVL), 292–312 (ALLP…QAVI), 344–364 (IFLP…VLSF), 370–390 (LATA…IMAF), 401–421 (LPVA…FLGA), and 426–446 (IHDG…VMWT).

This sequence belongs to the HAK/KUP transporter (TC 2.A.72) family.

It is found in the cell inner membrane. It carries out the reaction K(+)(in) + H(+)(in) = K(+)(out) + H(+)(out). In terms of biological role, transport of potassium into the cell. Likely operates as a K(+):H(+) symporter. The polypeptide is Probable potassium transport system protein Kup 1 (Rhizobium etli (strain ATCC 51251 / DSM 11541 / JCM 21823 / NBRC 15573 / CFN 42)).